A 501-amino-acid chain; its full sequence is Probable cytosol aminopeptidase (501 aa).

Mn(2+)-binding residues include Lys-268 and Asp-273. Lys-280 is an active-site residue. Mn(2+)-binding residues include Asp-291, Asp-350, and Glu-352. The active site involves Arg-354.

Belongs to the peptidase M17 family. The cofactor is Mn(2+).

The protein localises to the cytoplasm. The catalysed reaction is Release of an N-terminal amino acid, Xaa-|-Yaa-, in which Xaa is preferably Leu, but may be other amino acids including Pro although not Arg or Lys, and Yaa may be Pro. Amino acid amides and methyl esters are also readily hydrolyzed, but rates on arylamides are exceedingly low.. The enzyme catalyses Release of an N-terminal amino acid, preferentially leucine, but not glutamic or aspartic acids.. Functionally, presumably involved in the processing and regular turnover of intracellular proteins. Catalyzes the removal of unsubstituted N-terminal amino acids from various peptides. This Colwellia psychrerythraea (strain 34H / ATCC BAA-681) (Vibrio psychroerythus) protein is Probable cytosol aminopeptidase.